Consider the following 569-residue polypeptide: Urease subunit alpha (569 aa).

In terms of domain architecture, Urease spans 131–569; it reads GGIDTHIHFI…LPLAQRYLLL (439 aa). Positions 136, 138, and 219 each coordinate Ni(2+). Position 219 is an N6-carboxylysine (lysine 219). Position 221 (histidine 221) interacts with substrate. Ni(2+) is bound by residues histidine 248 and histidine 274. The Proton donor role is filled by histidine 322. Ni(2+) is bound at residue aspartate 362.

The protein belongs to the metallo-dependent hydrolases superfamily. Urease alpha subunit family. Heterotrimer of UreA (gamma), UreB (beta) and UreC (alpha) subunits. Three heterotrimers associate to form the active enzyme. Requires Ni cation as cofactor. Carboxylation allows a single lysine to coordinate two nickel ions.

The protein localises to the cytoplasm. It catalyses the reaction urea + 2 H2O + H(+) = hydrogencarbonate + 2 NH4(+). It functions in the pathway nitrogen metabolism; urea degradation; CO(2) and NH(3) from urea (urease route): step 1/1. The protein is Urease subunit alpha of Synechococcus sp. (strain CC9605).